A 209-amino-acid polypeptide reads, in one-letter code: NAD(P)H-quinone oxidoreductase subunit K 2 (209 aa).

4 residues coordinate [4Fe-4S] cluster: Cys53, Cys54, Cys118, and Cys149.

This sequence belongs to the complex I 20 kDa subunit family. NDH-1 can be composed of about 15 different subunits; different subcomplexes with different compositions have been identified which probably have different functions. It depends on [4Fe-4S] cluster as a cofactor.

It is found in the cellular thylakoid membrane. It catalyses the reaction a plastoquinone + NADH + (n+1) H(+)(in) = a plastoquinol + NAD(+) + n H(+)(out). It carries out the reaction a plastoquinone + NADPH + (n+1) H(+)(in) = a plastoquinol + NADP(+) + n H(+)(out). NDH-1 shuttles electrons from an unknown electron donor, via FMN and iron-sulfur (Fe-S) centers, to quinones in the respiratory and/or the photosynthetic chain. The immediate electron acceptor for the enzyme in this species is believed to be plastoquinone. Couples the redox reaction to proton translocation, and thus conserves the redox energy in a proton gradient. Cyanobacterial NDH-1 also plays a role in inorganic carbon-concentration. This chain is NAD(P)H-quinone oxidoreductase subunit K 2, found in Acaryochloris marina (strain MBIC 11017).